The following is a 182-amino-acid chain: MNENIAKSISKFLSLVLRHSPEKIGLKLDENGWADVNELIEKCTKKGNRLDAELLDYVVENNDKKRFAYNEDKTKIRASQGHSISVELNLAETEPLEYLYHGTVGKFMESIQKEGLKKMSRQHVHLSKDKETAVKVGSRRGVPQILTVRSGAMYRDGFKFYLSENNVWLTDEVPPKYIEFKS.

Belongs to the KptA/TPT1 family.

Functionally, removes the 2'-phosphate from RNA via an intermediate in which the phosphate is ADP-ribosylated by NAD followed by a presumed transesterification to release the RNA and generate ADP-ribose 1''-2''-cyclic phosphate (APPR&gt;P). May function as an ADP-ribosylase. The sequence is that of Probable RNA 2'-phosphotransferase from Flavobacterium johnsoniae (strain ATCC 17061 / DSM 2064 / JCM 8514 / BCRC 14874 / CCUG 350202 / NBRC 14942 / NCIMB 11054 / UW101) (Cytophaga johnsonae).